The chain runs to 165 residues: Small ribosomal subunit protein uS3m (165 aa).

The N-terminal 30 residues, 1 to 30 (MNFLKKLLPQVATEVQQLSRSGFHTSSVCC), are a transit peptide targeting the mitochondrion.

This sequence belongs to the universal ribosomal protein uS3 family. As to quaternary structure, component of the mitochondrial ribosome small subunit (28S) which comprises a 12S rRNA and about 30 distinct proteins.

It is found in the mitochondrion. The protein is Small ribosomal subunit protein uS3m (mRpS24) of Drosophila melanogaster (Fruit fly).